Here is a 231-residue protein sequence, read N- to C-terminus: Histone H1 (231 aa).

Residues 1-17 show a composition bias toward low complexity; that stretch reads MSDPAIEVAPVPVASPA. 2 disordered regions span residues 1 to 44 and 124 to 231; these read MSDP…PVSD and TKKV…AKKA. Positions 38 to 112 constitute an H15 domain; the sequence is THPPVSDMIV…GASGSFKLPA (75 aa). Basic residues-rich tracts occupy residues 145 to 171, 178 to 213, and 221 to 231; these read KVKK…KTTK, PTKK…KAKK, and KAAKKPSAKKA.

Belongs to the histone H1/H5 family.

The protein localises to the nucleus. Its subcellular location is the chromosome. Functionally, histones H1 are necessary for the condensation of nucleosome chains into higher-order structures. In Chironomus thummi thummi (Midge), this protein is Histone H1.